Consider the following 519-residue polypeptide: Putative ATP-dependent RNA helicase L396 (519 aa).

In terms of domain architecture, Helicase ATP-binding spans 110 to 258 (IKGMEEGGGG…IINWYMGPIL (149 aa)). Residue 123–130 (MGCGSGKT) participates in ATP binding. The short motif at 211-214 (DEVH) is the DEAH box element. The 141-residue stretch at 317–457 (YLIQELFDMG…KQKYNIQKYY (141 aa)) folds into the Helicase C-terminal domain.

This sequence belongs to the DEAD box helicase family. DEAH subfamily.

It catalyses the reaction ATP + H2O = ADP + phosphate + H(+). This Acanthamoeba polyphaga (Amoeba) protein is Putative ATP-dependent RNA helicase L396.